The following is a 344-amino-acid chain: Angiopoietin-related protein 7 (344 aa).

Positions 1–26 are cleaved as a signal peptide; sequence MLKKTLSAVAWLCIFLVAFVSHPVWP. A coiled-coil region spans residues 37–116; the sequence is ELTAATCCEE…IGIMQLQAAQ (80 aa). Residue N56 is glycosylated (N-linked (GlcNAc...) asparagine). In terms of domain architecture, Fibrinogen C-terminal spans 120–341; that stretch reads QTSADAIYDC…RVEMKIRPED (222 aa). C129 and C160 are oxidised to a cystine. N-linked (GlcNAc...) asparagine glycosylation is found at N251 and N265. A disulfide bond links C283 and C296.

Homotetramer; disulfide-linked.

It is found in the secreted. In terms of biological role, has a role in the formation and organization of the extracellular matrix. In the eye, it functions as a mediator of dexamethasone-induced matrix deposition in the trabecular meshwork, the tissue responsible for the outflow of the ocular aqueous humor and for the maintenance of intraocular pressure. Is a negative regulator of angiogenesis in the cornea, and plays a major role in maintaining corneal avascularity and transparency. The chain is Angiopoietin-related protein 7 (ANGPTL7) from Bos taurus (Bovine).